Consider the following 436-residue polypeptide: 3-ketoacyl-CoA thiolase (436 aa).

The active-site Acyl-thioester intermediate is cysteine 99. Catalysis depends on proton acceptor residues histidine 392 and cysteine 422.

This sequence belongs to the thiolase-like superfamily. Thiolase family. Heterotetramer of two alpha chains (FadJ) and two beta chains (FadI).

It is found in the cytoplasm. The catalysed reaction is an acyl-CoA + acetyl-CoA = a 3-oxoacyl-CoA + CoA. It functions in the pathway lipid metabolism; fatty acid beta-oxidation. Functionally, catalyzes the final step of fatty acid oxidation in which acetyl-CoA is released and the CoA ester of a fatty acid two carbons shorter is formed. In Shigella boydii serotype 18 (strain CDC 3083-94 / BS512), this protein is 3-ketoacyl-CoA thiolase.